Reading from the N-terminus, the 345-residue chain is Protein RecA (345 aa).

ATP is bound at residue 66–73 (GPESSGKT).

Belongs to the RecA family.

The protein resides in the cytoplasm. Can catalyze the hydrolysis of ATP in the presence of single-stranded DNA, the ATP-dependent uptake of single-stranded DNA by duplex DNA, and the ATP-dependent hybridization of homologous single-stranded DNAs. It interacts with LexA causing its activation and leading to its autocatalytic cleavage. The chain is Protein RecA from Helicobacter hepaticus (strain ATCC 51449 / 3B1).